The primary structure comprises 441 residues: Ribosomal protein uS12 methylthiotransferase RimO (441 aa).

Positions 8-118 constitute an MTTase N-terminal domain; it reads PKIGFVSLGC…VLEHVHHYTP (111 aa). [4Fe-4S] cluster is bound by residues cysteine 17, cysteine 53, cysteine 82, cysteine 150, cysteine 154, and cysteine 157. The Radical SAM core domain maps to 136 to 373; sequence LTPRHYAYLK…MQLQQQISAE (238 aa). The TRAM domain occupies 376-441; the sequence is QEKVGREILV…DEYDLWGTRV (66 aa).

Belongs to the methylthiotransferase family. RimO subfamily. The cofactor is [4Fe-4S] cluster.

The protein resides in the cytoplasm. It catalyses the reaction L-aspartate(89)-[ribosomal protein uS12]-hydrogen + (sulfur carrier)-SH + AH2 + 2 S-adenosyl-L-methionine = 3-methylsulfanyl-L-aspartate(89)-[ribosomal protein uS12]-hydrogen + (sulfur carrier)-H + 5'-deoxyadenosine + L-methionine + A + S-adenosyl-L-homocysteine + 2 H(+). Catalyzes the methylthiolation of an aspartic acid residue of ribosomal protein uS12. This is Ribosomal protein uS12 methylthiotransferase RimO from Klebsiella pneumoniae subsp. pneumoniae (strain ATCC 700721 / MGH 78578).